Here is a 130-residue protein sequence, read N- to C-terminus: Small ribosomal subunit protein uS11c (130 aa).

The protein belongs to the universal ribosomal protein uS11 family. In terms of assembly, part of the 30S ribosomal subunit.

The protein localises to the plastid. It is found in the chloroplast. This chain is Small ribosomal subunit protein uS11c, found in Marsilea quadrifolia (European water clover).